The chain runs to 257 residues: Beta-fibrinogenase mucrofibrase-4 (257 aa).

The N-terminal stretch at 1-18 (MVLIRVLANLLILQLSYA) is a signal peptide. The propeptide occupies 19–24 (QKSSEL). One can recognise a Peptidase S1 domain in the interval 25–248 (VIGGDECNIN…HLDWIKGFIA (224 aa)). Cystine bridges form between Cys-31–Cys-162, Cys-49–Cys-65, Cys-97–Cys-255, Cys-141–Cys-209, Cys-173–Cys-188, and Cys-199–Cys-224. Residues His-64 and Asp-109 each act as charge relay system in the active site. The active-site Charge relay system is Ser-203.

Belongs to the peptidase S1 family. Snake venom subfamily. In terms of assembly, monomer. As to expression, expressed by the venom gland.

The protein resides in the secreted. Snake venom serine protease with fibrinogenolytic activities. Cleaves beta-chain of fibrinogen (FGB) efficiently and shows relatively lower activity on alpha-chain. This chain is Beta-fibrinogenase mucrofibrase-4, found in Protobothrops mucrosquamatus (Taiwan habu).